Here is a 323-residue protein sequence, read N- to C-terminus: Sphingolipid delta(4)-desaturase/C4-monooxygenase DES2 (323 aa).

Glycine 2 carries the N-myristoyl glycine lipid modification. The next 2 membrane-spanning stretches (helical) occupy residues 45–65 and 68–88; these read WAVL…RGLA and WLLF…TLAI. The short motif at 89–93 is the Histidine box-1 element; it reads HDISH. The tract at residues 95–99 is required for C4-hydroxylase activity; it reads AAFGT. A Histidine box-2 motif is present at residues 128-132; that stretch reads HVDHH. Residues 210–231 form a helical membrane-spanning segment; that stretch reads VYLLASSFLGLGLHPISGHFVA. Residues 259–263 carry the Histidine box-3 motif; it reads HVEHH.

The protein belongs to the fatty acid desaturase type 1 family. DEGS subfamily. As to expression, highly expressed in skin, intestine and kidney.

It is found in the endoplasmic reticulum membrane. The catalysed reaction is a dihydroceramide + 2 Fe(II)-[cytochrome b5] + O2 + 2 H(+) = a phytoceramide + 2 Fe(III)-[cytochrome b5] + H2O. It catalyses the reaction an N-acylsphinganine + 2 Fe(II)-[cytochrome b5] + O2 + 2 H(+) = an N-acylsphing-4-enine + 2 Fe(III)-[cytochrome b5] + 2 H2O. It carries out the reaction N-octanoylsphinganine + 2 Fe(II)-[cytochrome b5] + O2 + 2 H(+) = N-octanoyl-4-hydroxysphinganine + 2 Fe(III)-[cytochrome b5] + H2O. The enzyme catalyses an N-acylsphinganine + 2 Fe(II)-[cytochrome b5] + O2 + 2 H(+) = an N-acyl-(4R)-4-hydroxysphinganine + 2 Fe(III)-[cytochrome b5] + H2O. It participates in membrane lipid metabolism; sphingolipid biosynthesis. Its function is as follows. Bifunctional enzyme which acts both as a sphingolipid delta(4)-desaturase and a sphingolipid C4-monooxygenase. In Homo sapiens (Human), this protein is Sphingolipid delta(4)-desaturase/C4-monooxygenase DES2.